The chain runs to 379 residues: Cytochrome b (379 aa).

4 helical membrane passes run leucine 33 to methionine 53, tryptophan 77 to isoleucine 98, tryptophan 113 to leucine 133, and phenylalanine 178 to leucine 198. Heme b contacts are provided by histidine 83 and histidine 97. Residues histidine 182 and histidine 196 each contribute to the heme b site. Histidine 201 is a binding site for a ubiquinone. 4 helical membrane-spanning segments follow: residues isoleucine 226–histidine 246, leucine 288–histidine 308, isoleucine 320–glycine 340, and phenylalanine 347–proline 367.

It belongs to the cytochrome b family. As to quaternary structure, the cytochrome bc1 complex contains 11 subunits: 3 respiratory subunits (MT-CYB, CYC1 and UQCRFS1), 2 core proteins (UQCRC1 and UQCRC2) and 6 low-molecular weight proteins (UQCRH/QCR6, UQCRB/QCR7, UQCRQ/QCR8, UQCR10/QCR9, UQCR11/QCR10 and a cleavage product of UQCRFS1). This cytochrome bc1 complex then forms a dimer. It depends on heme b as a cofactor.

It localises to the mitochondrion inner membrane. Functionally, component of the ubiquinol-cytochrome c reductase complex (complex III or cytochrome b-c1 complex) that is part of the mitochondrial respiratory chain. The b-c1 complex mediates electron transfer from ubiquinol to cytochrome c. Contributes to the generation of a proton gradient across the mitochondrial membrane that is then used for ATP synthesis. The polypeptide is Cytochrome b (MT-CYB) (Bradypus tridactylus (Pale-throated three-toed sloth)).